A 1110-amino-acid polypeptide reads, in one-letter code: Ribosome assembly protein 1 (1110 aa).

The tr-type G domain occupies 17-262 (SCIRNICIVA…QKLGAKRENL (246 aa)). GTP-binding positions include 26–33 (AHVDHGKT), 102–106 (DSPGH), and 156–159 (NKID). The residue at position 431 (Ser431) is a Phosphoserine.

This sequence belongs to the TRAFAC class translation factor GTPase superfamily. Classic translation factor GTPase family.

Its subcellular location is the cytoplasm. It carries out the reaction GTP + H2O = GDP + phosphate + H(+). GTPase activity is stimulated in the presence of 60S subunits. Its function is as follows. GTPase involved in the biogenesis of the 60S ribosomal subunit and translational activation of ribosomes. Together with SDO1, may trigger the GTP-dependent release of TIF6 from 60S pre-ribosomes in the cytoplasm, thereby activating ribosomes for translation competence by allowing 80S ribosome assembly and facilitating TIF6 recycling to the nucleus, where it is required for 60S rRNA processing and nuclear export. Inhibits GTPase activity of ribosome-bound EF-2. The protein is Ribosome assembly protein 1 (RIA1) of Saccharomyces cerevisiae (strain ATCC 204508 / S288c) (Baker's yeast).